The chain runs to 187 residues: Ethylene-responsive transcription factor ERF015 (187 aa).

Positions 26–83 (CYRGVRKRSWGKWVSEIRVPKTGRRIWLGSYDAPEKAARAYDAALFCIRGEKGVYNFP) form a DNA-binding region, AP2/ERF.

The protein belongs to the AP2/ERF transcription factor family. ERF subfamily.

It localises to the nucleus. Its function is as follows. Probably acts as a transcriptional activator. Binds to the GCC-box pathogenesis-related promoter element. May be involved in the regulation of gene expression by stress factors and by components of stress signal transduction pathways. The chain is Ethylene-responsive transcription factor ERF015 (ERF015) from Arabidopsis thaliana (Mouse-ear cress).